The chain runs to 148 residues: Large ribosomal subunit protein bL9 (148 aa).

It belongs to the bacterial ribosomal protein bL9 family.

In terms of biological role, binds to the 23S rRNA. This is Large ribosomal subunit protein bL9 from Ruminiclostridium cellulolyticum (strain ATCC 35319 / DSM 5812 / JCM 6584 / H10) (Clostridium cellulolyticum).